Here is a 366-residue protein sequence, read N- to C-terminus: Probable trehalose-phosphate phosphatase 3 (366 aa).

This sequence belongs to the trehalose phosphatase family. It depends on a divalent metal cation as a cofactor.

The catalysed reaction is alpha,alpha-trehalose 6-phosphate + H2O = alpha,alpha-trehalose + phosphate. It participates in glycan biosynthesis; trehalose biosynthesis. Its function is as follows. Removes the phosphate from trehalose 6-phosphate to produce free trehalose. Trehalose accumulation in plant may improve abiotic stress tolerance. In Oryza sativa subsp. japonica (Rice), this protein is Probable trehalose-phosphate phosphatase 3 (TPP3).